We begin with the raw amino-acid sequence, 77 residues long: uncharacterized protein (77 aa).

This is an uncharacterized protein from Xylella fastidiosa (strain 9a5c).